Reading from the N-terminus, the 279-residue chain is Protein COP1 SUPPRESSOR 2 (279 aa).

Disordered stretches follow at residues 1–29 (MPPKRNFRKRSFEEEEEDNDVNKAAISEE) and 57–79 (SSTAQSSIGKVKPVEKTETEGEK). Residues 68-79 (KPVEKTETEGEK) are compositionally biased toward basic and acidic residues. Residues 86–183 (DTFAQETAVL…EETEAAKKLL (98 aa)) adopt a coiled-coil conformation. Residues 217 to 229 (LRREHPELYKDRG) are compositionally biased toward basic and acidic residues. A disordered region spans residues 217–279 (LRREHPELYK…KRERNRVMRR (63 aa)). Residues 250-260 (ADSGKSRQAAT) are compositionally biased toward polar residues. Residues 270–279 (KRERNRVMRR) are compositionally biased toward basic residues.

The protein belongs to the TLS1 family. Interacts with COP1.

It localises to the nucleus. It is found in the nucleus speckle. Inhibits E3 ubiquitin-protein ligase activity of COP1, a central repressor of seedling photomorphogenesis. Represses COP1-mediated turnover of HY5 in the dark. Required for primary root development under normal light growth conditions. The chain is Protein COP1 SUPPRESSOR 2 from Arabidopsis thaliana (Mouse-ear cress).